The primary structure comprises 643 residues: Lysophospholipase ARB_05919 (643 aa).

Residues Met-1–Gly-22 form the signal peptide. Positions Asp-50–Asn-597 constitute a PLA2c domain. Asn-142, Asn-176, Asn-195, Asn-293, Asn-466, Asn-472, Asn-482, Asn-503, Asn-524, Asn-533, Asn-552, and Asn-597 each carry an N-linked (GlcNAc...) asparagine glycan.

Belongs to the lysophospholipase family.

It localises to the secreted. The catalysed reaction is a 1-acyl-sn-glycero-3-phosphocholine + H2O = sn-glycerol 3-phosphocholine + a fatty acid + H(+). In terms of biological role, catalyzes the release of fatty acids from lysophospholipids. Phospholipase B may well contribute to pathogenicity by abetting the fungus in damaging host cell membranes. The chain is Lysophospholipase ARB_05919 from Arthroderma benhamiae (strain ATCC MYA-4681 / CBS 112371) (Trichophyton mentagrophytes).